The primary structure comprises 607 residues: UvrABC system protein C (607 aa).

The GIY-YIG domain maps to 15-93; the sequence is RKPGVYRMLD…IKELKPPYNI (79 aa). A UVR domain is found at 203–238; that stretch reads REVADQLSTDMEAAAAALEFEKAALLRDQLAAIQAV. Over residues 542–551 the composition is skewed to basic residues; that stretch reads HRARRGKARK. The disordered stretch occupies residues 542-561; it reads HRARRGKARKQSTLDEIPGI.

The protein belongs to the UvrC family. As to quaternary structure, interacts with UvrB in an incision complex.

It is found in the cytoplasm. Functionally, the UvrABC repair system catalyzes the recognition and processing of DNA lesions. UvrC both incises the 5' and 3' sides of the lesion. The N-terminal half is responsible for the 3' incision and the C-terminal half is responsible for the 5' incision. The chain is UvrABC system protein C from Alcanivorax borkumensis (strain ATCC 700651 / DSM 11573 / NCIMB 13689 / SK2).